The sequence spans 218 residues: Hypoxanthine-guanine phosphoribosyltransferase (218 aa).

GMP contacts are provided by residues Lys-69, 134–142, Lys-166, 186–188, and Asp-194; these read EDIIDTGKT and KFV. The active-site Proton acceptor is Asp-138. Residue Asp-194 coordinates Mg(2+).

The protein belongs to the purine/pyrimidine phosphoribosyltransferase family. In terms of assembly, homotetramer. Mg(2+) is required as a cofactor.

The protein localises to the cytoplasm. The catalysed reaction is IMP + diphosphate = hypoxanthine + 5-phospho-alpha-D-ribose 1-diphosphate. It carries out the reaction GMP + diphosphate = guanine + 5-phospho-alpha-D-ribose 1-diphosphate. The protein operates within purine metabolism; IMP biosynthesis via salvage pathway; IMP from hypoxanthine: step 1/1. Functionally, converts guanine to guanosine monophosphate, and hypoxanthine to inosine monophosphate. Transfers the 5-phosphoribosyl group from 5-phosphoribosylpyrophosphate onto the purine. Plays a central role in the generation of purine nucleotides through the purine salvage pathway. This is Hypoxanthine-guanine phosphoribosyltransferase (HPRT1) from Gallus gallus (Chicken).